Consider the following 383-residue polypeptide: Putative glutamate--cysteine ligase 2 (383 aa).

This sequence belongs to the glutamate--cysteine ligase type 2 family. YbdK subfamily.

The catalysed reaction is L-cysteine + L-glutamate + ATP = gamma-L-glutamyl-L-cysteine + ADP + phosphate + H(+). Its function is as follows. ATP-dependent carboxylate-amine ligase which exhibits weak glutamate--cysteine ligase activity. The protein is Putative glutamate--cysteine ligase 2 of Clavibacter michiganensis subsp. michiganensis (strain NCPPB 382).